The following is a 539-amino-acid chain: Phosphoenolpyruvate carboxykinase (ATP) (539 aa).

Residues arginine 64, tyrosine 206, and lysine 212 each contribute to the substrate site. Residues lysine 212, histidine 231, and glycine 247–threonine 255 contribute to the ATP site. Mn(2+)-binding residues include lysine 212 and histidine 231. Aspartate 268 serves as a coordination point for Mn(2+). Residues glutamate 296, arginine 332, arginine 448–isoleucine 449, and threonine 454 each bind ATP. A substrate-binding site is contributed by arginine 332.

This sequence belongs to the phosphoenolpyruvate carboxykinase (ATP) family. In terms of assembly, monomer. Mn(2+) serves as cofactor.

Its subcellular location is the cytoplasm. It carries out the reaction oxaloacetate + ATP = phosphoenolpyruvate + ADP + CO2. It participates in carbohydrate biosynthesis; gluconeogenesis. Involved in the gluconeogenesis. Catalyzes the conversion of oxaloacetate (OAA) to phosphoenolpyruvate (PEP) through direct phosphoryl transfer between the nucleoside triphosphate and OAA. The chain is Phosphoenolpyruvate carboxykinase (ATP) from Salmonella arizonae (strain ATCC BAA-731 / CDC346-86 / RSK2980).